The chain runs to 220 residues: Inner membrane protein YqjA (220 aa).

At 1–27 (MELLTQLLQALWAQDFETLANPSMIGM) the chain is on the periplasmic side. Residues 28–48 (LYFVLFVILFLENGLLPAAFL) traverse the membrane as a helical segment. Topologically, residues 49–52 (PGDS) are cytoplasmic. The next 2 helical transmembrane spans lie at 53-73 (LLVL…QTIL) and 74-94 (LLTV…RWLG). At 95 to 154 (NTRTVQNWLSHLPAHYHQRAHHLFHKHGLSALLIGRFIAFVRTLLPTIAGLSGLNNARFQ) the chain is on the cytoplasmic side. The helical transmembrane segment at 155-175 (FFNWMSGLLWVLILTTLGYML) threads the bilayer. At 176-191 (GKTPVFLKYEDQLMSC) the chain is on the periplasmic side. The helical transmembrane segment at 192–212 (LMLLPVVLLVFGLAGSLVVLW) threads the bilayer. The Cytoplasmic portion of the chain corresponds to 213–220 (KKKYGNRG).

It belongs to the DedA family.

The protein localises to the cell inner membrane. Its function is as follows. May be a membrane transporter required for proton motive force (PMF)-dependent drug efflux. Required, with YghB, for the proper export of certain periplasmic amidases and, possibly, other Tat substrates. May play a role in determining membrane lipid composition. The sequence is that of Inner membrane protein YqjA (yqjA) from Escherichia coli (strain K12).